The chain runs to 1226 residues: Phosphatidylinositol 3,4,5-trisphosphate 5-phosphatase 2B (1226 aa).

The 97-residue stretch at 6–102 (WYHRDISRVR…GLVAPLLYPV (97 aa)) folds into the SH2 domain. A disordered region spans residues 106 to 144 (SEANDESSDGDDEKPGSTFANSPPRAISPTATSPPSSSA). The segment covering 108-117 (ANDESSDGDD) has biased composition (acidic residues). Positions 127 to 144 (SPPRAISPTATSPPSSSA) are enriched in low complexity. The short motif at 906 to 909 (NPAY) is the NPXY motif element. Position 909 is a phosphotyrosine (Y909). 2 disordered regions span residues 945-964 (RVTGSHGHGKRSARRSDFTE) and 985-1035 (SSAA…LSGK). The span at 1011-1025 (HSSNSSLQLQSHKNN) shows a compositional bias: low complexity. The 64-residue stretch at 1163–1226 (GAPETVRELL…ILENLPKIWD (64 aa)) folds into the SAM domain.

The protein belongs to the inositol 1,4,5-trisphosphate 5-phosphatase family. Post-translationally, tyrosine phosphorylated by the members of the SRC family after exposure to a diverse array of extracellular stimuli.

It is found in the cytoplasm. It localises to the cytosol. The protein localises to the cytoskeleton. The protein resides in the membrane. Its subcellular location is the cell projection. It is found in the filopodium. It localises to the lamellipodium. The protein localises to the nucleus. The protein resides in the nucleus speckle. It carries out the reaction a 1,2-diacyl-sn-glycero-3-phospho-(1D-myo-inositol-3,4,5-trisphosphate) + H2O = a 1,2-diacyl-sn-glycero-3-phospho-(1D-myo-inositol-3,4-bisphosphate) + phosphate. Functionally, phosphatidylinositol (PtdIns) phosphatase that specifically hydrolyzes the 5-phosphate of phosphatidylinositol-3,4,5-trisphosphate (PtdIns(3,4,5)P3) to produce PtdIns(3,4)P2, thereby negatively regulating the PI3K (phosphoinositide 3-kinase) pathways. Plays a central role in regulation of PI3K-dependent insulin signaling, although the precise molecular mechanisms and signaling pathways remain unclear. Part of a signaling pathway that regulates actin cytoskeleton remodeling. Required for the maintenance and dynamic remodeling of actin structures as well as in endocytosis, having a major impact on ligand-induced EGFR internalization and degradation. Participates in regulation of cortical and submembraneous actin. Regulates cell adhesion and cell spreading. Acts as a negative regulator of the FC-gamma-RIIA receptor (FCGR2A). Mediates signaling from the FC-gamma-RIIB receptor (FCGR2B), playing a central role in terminating signal transduction from activating immune/hematopoietic cell receptor systems. May also hydrolyze PtdIns(1,3,4,5)P4, and could thus affect the levels of the higher inositol polyphosphates like InsP6. This chain is Phosphatidylinositol 3,4,5-trisphosphate 5-phosphatase 2B (inppl1b), found in Danio rerio (Zebrafish).